The chain runs to 177 residues: Thioredoxin M-type, chloroplastic (177 aa).

Residues M1–C64 constitute a chloroplast transit peptide. The region spanning E65 to Q177 is the Thioredoxin domain. Active-site nucleophile residues include C101 and C104. C101 and C104 form a disulfide bridge.

This sequence belongs to the thioredoxin family. Plant M-type subfamily. In terms of assembly, forms a complex with heterodimeric ferredoxin-thioredoxin reductase (FTR) and ferredoxin.

The protein resides in the plastid. The protein localises to the chloroplast. Functionally, participates in various redox reactions through the reversible oxidation of the active center dithiol to a disulfide. The M form is known to activate NADP-malate dehydrogenase. In Brassica napus (Rape), this protein is Thioredoxin M-type, chloroplastic.